Here is a 126-residue protein sequence, read N- to C-terminus: MTPKPIRVFVYKNLHRTHREGKPWYSVQALEGDFKGRVIHRSGHVLLAHAKGVVRPAGRDKVRRERRKVVHAGIVGELISLLPQDFVGSKIAYNPYENDTFVHANTQAPFLGADRVYLSDSGVRAA.

The protein is Gene 82 protein (82) of Mycobacterium phage L5 (Mycobacteriophage L5).